We begin with the raw amino-acid sequence, 147 residues long: Protein-export protein SecB 2 (147 aa).

Belongs to the SecB family. As to quaternary structure, homotetramer, a dimer of dimers. One homotetramer interacts with 1 SecA dimer.

The protein localises to the cytoplasm. Functionally, one of the proteins required for the normal export of preproteins out of the cell cytoplasm. It is a molecular chaperone that binds to a subset of precursor proteins, maintaining them in a translocation-competent state. It also specifically binds to its receptor SecA. In Francisella tularensis subsp. holarctica (strain FTNF002-00 / FTA), this protein is Protein-export protein SecB 2.